We begin with the raw amino-acid sequence, 721 residues long: Glucans biosynthesis glucosyltransferase H (721 aa).

Helical transmembrane passes span 54–74 (LIMVATAVLSAAGIYEMYQVL), 85–105 (VVLVLFAALFAWVALSFVSAL), 404–424 (GIGAYLTAPMWLAFLVAGILI), 458–478 (FAGTMGLLILPKLLALLLVLI), 493–513 (FGGVLLETMISALTAPVMMVF), 548–568 (YALPTALGATMAVGAWLVSWP), and 569–589 (LLLWMTPVIVGLLLAIPVALL).

This sequence belongs to the glycosyltransferase 2 family. OpgH subfamily.

It is found in the cell inner membrane. The protein operates within glycan metabolism; osmoregulated periplasmic glucan (OPG) biosynthesis. Its function is as follows. Involved in the biosynthesis of osmoregulated periplasmic glucans (OPGs). The protein is Glucans biosynthesis glucosyltransferase H of Rhodopseudomonas palustris (strain TIE-1).